A 225-amino-acid polypeptide reads, in one-letter code: uncharacterized protein (225 aa).

The segment at 1-48 (MTQLVTRARSARGSTLGEQPRQDQLDFADHTGTAGDGNDGAAAASGPV) is disordered. The span at 20–29 (PRQDQLDFAD) shows a compositional bias: basic and acidic residues. Residues 64-136 (GYRGPSACQI…LHNIRVAVDH (73 aa)) enclose the HTH merR-type domain. Residues 201–225 (DGGESIAAPEDELASRRKHRDRKIG) are disordered. A compositionally biased stretch (basic residues) spans 216–225 (RRKHRDRKIG).

This is an uncharacterized protein from Mycobacterium tuberculosis (strain CDC 1551 / Oshkosh).